Consider the following 254-residue polypeptide: MRVLLSNDDGVHAAGLKALAEAFHGDEVWVVAPDREQSASSHAISLHRPLRLLEVAPRWYAVDGTPTDAVYMGLNLVLRDARPDVVVSGVNHGPNLGNDVLYSGTVAAAMEGALLGVNAIAVSLAAPPPHDFGEAARFAAALARQVVARPPPAPVLLNVNVPPGPVRGYRFARLGRRTYGNEVVEKTDPRGRKYYWIGGEGRVHNEDIPGSDCNTVLLERLAAVTPLHLDGTHDPMFQELRSWTVPGYEKEPAP.

4 residues coordinate a divalent metal cation: aspartate 8, aspartate 9, serine 38, and asparagine 91.

It belongs to the SurE nucleotidase family. Requires a divalent metal cation as cofactor.

It localises to the cytoplasm. It carries out the reaction a ribonucleoside 5'-phosphate + H2O = a ribonucleoside + phosphate. In terms of biological role, nucleotidase that shows phosphatase activity on nucleoside 5'-monophosphates. This chain is 5'-nucleotidase SurE, found in Anaeromyxobacter dehalogenans (strain 2CP-1 / ATCC BAA-258).